The following is a 454-amino-acid chain: tRNA modification GTPase MnmE (454 aa).

The (6S)-5-formyl-5,6,7,8-tetrahydrofolate site is built by Arg23, Glu80, and Lys120. One can recognise a TrmE-type G domain in the interval 216-377 (GMKVVIAGRP…LRDHLKQSMG (162 aa)). A K(+)-binding site is contributed by Asn226. GTP is bound by residues 226–231 (NAGKSS), 245–251 (TDIAGTT), 270–273 (DTAG), 335–338 (NKAD), and 358–360 (SAR). Residue Ser230 coordinates Mg(2+). K(+) is bound by residues Thr245, Ile247, and Thr250. Thr251 is a Mg(2+) binding site. Residue Lys454 participates in (6S)-5-formyl-5,6,7,8-tetrahydrofolate binding.

It belongs to the TRAFAC class TrmE-Era-EngA-EngB-Septin-like GTPase superfamily. TrmE GTPase family. As to quaternary structure, homodimer. Heterotetramer of two MnmE and two MnmG subunits. K(+) serves as cofactor.

The protein resides in the cytoplasm. Exhibits a very high intrinsic GTPase hydrolysis rate. Involved in the addition of a carboxymethylaminomethyl (cmnm) group at the wobble position (U34) of certain tRNAs, forming tRNA-cmnm(5)s(2)U34. The sequence is that of tRNA modification GTPase MnmE from Yersinia pestis.